The chain runs to 98 residues: Toxin ParE1 (98 aa).

This sequence belongs to the RelE toxin family.

Functionally, toxic component of a type II toxin-antitoxin (TA) system. Its toxic effect is neutralized by coexpression with cognate antitoxin ParD1. This is Toxin ParE1 (parE1) from Mycobacterium tuberculosis (strain CDC 1551 / Oshkosh).